Consider the following 222-residue polypeptide: Ribosomal RNA large subunit methyltransferase E (222 aa).

Positions 1–13 (MSRSDKNPHERLK) are enriched in basic and acidic residues. The interval 1–22 (MSRSDKNPHERLKTAKKRTASS) is disordered. 5 residues coordinate S-adenosyl-L-methionine: glycine 75, tryptophan 77, aspartate 94, aspartate 110, and aspartate 134. Lysine 174 serves as the catalytic Proton acceptor.

This sequence belongs to the class I-like SAM-binding methyltransferase superfamily. RNA methyltransferase RlmE family.

The protein localises to the cytoplasm. It carries out the reaction uridine(2552) in 23S rRNA + S-adenosyl-L-methionine = 2'-O-methyluridine(2552) in 23S rRNA + S-adenosyl-L-homocysteine + H(+). Its function is as follows. Specifically methylates the uridine in position 2552 of 23S rRNA at the 2'-O position of the ribose in the fully assembled 50S ribosomal subunit. The protein is Ribosomal RNA large subunit methyltransferase E of Novosphingobium aromaticivorans (strain ATCC 700278 / DSM 12444 / CCUG 56034 / CIP 105152 / NBRC 16084 / F199).